The chain runs to 160 residues: Type IV major fimbrial protein FimA (160 aa).

Residues 1–7 (MKSLQKG) constitute a propeptide, leader sequence. At Phe8 the chain carries N-methylphenylalanine. A helical transmembrane segment spans residues 8–28 (FTLIELMIVVAIIGILAAFAI). Cysteines 63 and 105 form a disulfide.

Belongs to the N-Me-Phe pilin family. In terms of assembly, the pili are polar flexible filaments of about 5.4 nanometers diameter and 2.5 micrometers average length; they consist of only a single polypeptide chain arranged in a helical configuration of five subunits per turn in the assembled pilus.

Its subcellular location is the fimbrium. The protein resides in the membrane. Functionally, major component of the type IV fimbriae that plays an essential role in twitching motility, natural transformation, and protease secretion. The sequence is that of Type IV major fimbrial protein FimA (fimA) from Dichelobacter nodosus (Bacteroides nodosus).